The sequence spans 241 residues: Ribonuclease PH (241 aa).

Residues Arg89 and Gly127–Arg129 contribute to the phosphate site.

The protein belongs to the RNase PH family. In terms of assembly, homohexameric ring arranged as a trimer of dimers.

It catalyses the reaction tRNA(n+1) + phosphate = tRNA(n) + a ribonucleoside 5'-diphosphate. Its function is as follows. Phosphorolytic 3'-5' exoribonuclease that plays an important role in tRNA 3'-end maturation. Removes nucleotide residues following the 3'-CCA terminus of tRNAs; can also add nucleotides to the ends of RNA molecules by using nucleoside diphosphates as substrates, but this may not be physiologically important. Probably plays a role in initiation of 16S rRNA degradation (leading to ribosome degradation) during starvation. The protein is Ribonuclease PH of Xanthomonas euvesicatoria pv. vesicatoria (strain 85-10) (Xanthomonas campestris pv. vesicatoria).